A 91-amino-acid polypeptide reads, in one-letter code: Small ribosomal subunit protein uS19 (91 aa).

The protein belongs to the universal ribosomal protein uS19 family.

Its function is as follows. Protein S19 forms a complex with S13 that binds strongly to the 16S ribosomal RNA. In Sphingopyxis alaskensis (strain DSM 13593 / LMG 18877 / RB2256) (Sphingomonas alaskensis), this protein is Small ribosomal subunit protein uS19.